Here is a 379-residue protein sequence, read N- to C-terminus: Stimulator of interferon genes protein (379 aa).

Topologically, residues 1–17 are cytoplasmic; that stretch reads MPYSNLHPSIPRPRSYR. The mediates interaction with ZDHHC1 and ZDHHC11 stretch occupies residues 1-190; that stretch reads MPYSNLHPSI…MFNQLHNNML (190 aa). A helical membrane pass occupies residues 18 to 34; the sequence is FKLAAFVLLVGSLMSLW. The Lumenal segment spans residues 35–44; that stretch reads MTGEPPSHTL. The chain crosses the membrane as a helical span at residues 45–69; it reads HYLALHVASQQLGLLLKKLCCLAEE. The Cytoplasmic portion of the chain corresponds to 70–91; that stretch reads LCHVQSRYQGSYWKAVRACVGS. A lipid anchor (S-palmitoyl cysteine) is attached at cysteine 88. Residues 92-106 traverse the membrane as a helical segment; that stretch reads PICFMALILLSFYFY. The Lumenal portion of the chain corresponds to 107–116; it reads CSLENTSDLR. Residues 117-134 form a helical membrane-spanning segment; sequence LAWHLGILVLSKSLSMTL. Residues 135 to 379 lie on the Cytoplasmic side of the membrane; that stretch reads DLQSLAPAEV…QPLPLRTDLI (245 aa). A Glycyl lysine isopeptide (Lys-Gly) (interchain with G-Cter in ubiquitin) cross-link involves residue lysine 151. The cyclic dinucleotide-binding domain (CBD) stretch occupies residues 153–340; the sequence is FNVAHGLAWS…RHIRQEEKEE (188 aa). 162-167 provides a ligand contact to 2',3'-cGAMP; the sequence is SYYIGY. Glycine 166 provides a ligand contact to 3',3'-c-di-GMP. Tyrosine 167 is a binding site for 2',3'-cUAMP. Lysine 236 is covalently cross-linked (Glycyl lysine isopeptide (Lys-Gly) (interchain with G-Cter in ubiquitin)). Arginine 238 provides a ligand contact to 2',3'-cUAMP. 2',3'-cGAMP contacts are provided by residues 238-241 and threonine 263; that span reads RAYS. 3',3'-c-di-GMP is bound by residues 238–241 and threonine 263; that span reads RAYS. Position 241 is a phosphoserine (serine 241). Threonine 263 contributes to the 2',3'-cUAMP binding site. Residue lysine 338 forms a Glycyl lysine isopeptide (Lys-Gly) (interchain with G-Cter in SUMO) linkage. Residues 340 to 379 are C-terminal tail (CTT); sequence EVTMSGPPTSVAPRPSLLSQEPRLLISGMEQPLPLRTDLI. Residue serine 355 is modified to Phosphoserine. Serine 358 and serine 366 each carry phosphoserine; by TBK1. The pLxIS motif signature appears at 363–366; it reads LLIS.

Belongs to the STING family. Homodimer; forms a homodimer in absence of cyclic nucleotide (c-di-GMP or cGAMP); 'Lys-63'-linked ubiquitination at Lys-151 is required for homodimerization. Homotetramer; in presence of cyclic nucleotide (c-di-GMP or cGAMP), forms tetramers and higher-order oligomers through side-by-side packing. Interacts (when phosphorylated) with IRF3; following activation and phosphorylation on the pLxIS motif by TBK1, recruits IRF3. Interacts with RIGI, MAVS and SSR2. Interacts with RNF5 and TRIM56. Interacts with TBK1; when homodimer, leading to subsequent production of IFN-beta. Interacts with IFIT1 and IFIT2. Interacts with TRIM29; this interaction induces STING1 ubiquitination and subsequent degradation. Associates with the MHC-II complex. Interacts with STEEP1; interaction takes place upon cGAMP-activation and STING1 phosphorylation by MAP3K7/TAK1 and promotes STING1 translocation to COPII vesicles. Interacts with SEC24A, SEC24B and SEC24C; promoting translocation to COPII vesicles. Interacts (when ubiquitinated) with SQSTM1; leading to relocalization to autophagosomes. Interacts with SURF4. Interacts with HNRNPA2B1. Interacts with ZDHHC1; ZDHHC1 constitutively interacts with STING1 and in presence of DNA viruses activates it by promoting its cGAMP-induced oligomerization and the recruitment of downstream signaling components. Interacts with ZDHHC11; in presence of DNA viruses promotes the recruitment of IRF3 to STING1. Interacts with TOMM70. Interacts with TAB1; promoting recruitment of TAB1 to the endoplasmic reticulum membrane and subsequent activation of MAP3K7/TAK1. Interacts (via transmembrane domain) with TMEM203. Interacts with DDX41. Post-translationally, phosphorylation by TBK1 leads to activation and production of IFN-beta. Following cyclic nucleotide (c-di-GMP or cGAMP)-binding, activation and translocation from the endoplasmic reticulum, STING1 is phosphorylated by TBK1 at Ser-366 in the pLxIS motif. The phosphorylated pLxIS motif constitutes an IRF3-binding motif, leading to recruitment of the transcription factor IRF3 to induce type-I interferons and other cytokines. Phosphorylated on tyrosine residues upon MHC-II aggregation. Dephosphorylation by PPP6C leads to inactivation and decreased production of IFN-beta. Phosphorylation at Ser-358 is also required to activate IRF3. Phosphorylation at Ser-355 by MAP3K7/TAK1 facilitates its interaction with STEEP1, promoting STING1 translocation to COPII vesicles. Ubiquitinated. Ubiquitinated via 'Lys-63'-linked ubiquitin chains in response to double-stranded DNA treatment, leading to relocalization to autophagosomes and subsequent degradation; this process is dependent on SQSTM1. 'Lys-63'-linked ubiquitination mediated by TRIM56 at Lys-151 promotes homodimerization and recruitment of the antiviral kinase TBK1 and subsequent production of IFN-beta. 'Lys-48'-linked polyubiquitination at Lys-151 occurring after viral infection is mediated by RNF5 and leads to proteasomal degradation. 'Lys-11'-linked polyubiquitination at Lys-151 by RNF26 leads to stabilize STING1: it protects STING1 from RNF5-mediated 'Lys-48'-linked polyubiquitination. 'Lys-33'-linked and 'Lys-48'-linked deubiquitinated by USP20; leading to its stabilization and promotion of innate antiviral response. 'Lys-48'-linked deubiquitinated by USP44; leading to its stabilization and promotion of innate antiviral response. Deubiquitinated by USP13; leading to inhibition of innate antiviral response. 'Lys-63'-linked deubiquitinated by USP49; leading to inhibition of the subsequent recruitment of TBK1 to the signaling complex. 'Lys-63'-linked ubiquitination mediated by RNF39 promotes the activation of the cGAS-STING pathway. In terms of processing, sumoylated at Lys-338 by TRIM38 during the early phase of viral infection, promoting its stability by preventing its relocalization to autophagosomes and subsequent degradation. Desumoylated by SENP2 during the late phase of viral infection. Post-translationally, palmitoylation takes place in the Golgi apparatus and creates a platform for the recruitment of TBK1.

The protein resides in the endoplasmic reticulum membrane. The protein localises to the cytoplasm. It localises to the perinuclear region. It is found in the endoplasmic reticulum-Golgi intermediate compartment membrane. Its subcellular location is the golgi apparatus membrane. The protein resides in the cytoplasmic vesicle. The protein localises to the autophagosome membrane. It localises to the mitochondrion outer membrane. It is found in the cell membrane. The enzyme catalyses H(+)(in) = H(+)(out). In contrast to mouse protein, not activated by anticancer molecule 5,6-dimethylxanthenone 4-acetic acid (DMXAA). Functionally, facilitator of innate immune signaling that acts as a sensor of cytosolic DNA from bacteria and viruses and promotes the production of type I interferon (IFN-alpha and IFN-beta). Innate immune response is triggered in response to non-CpG double-stranded DNA from viruses and bacteria delivered to the cytoplasm. Acts by binding cyclic dinucleotides: recognizes and binds cyclic di-GMP (c-di-GMP), a second messenger produced by bacteria, cyclic UMP-AMP (2',3'-cUAMP), and cyclic GMP-AMP (cGAMP), a messenger produced by CGAS in response to DNA virus in the cytosol. Upon binding to c-di-GMP, cUAMP or cGAMP, STING1 oligomerizes, translocates from the endoplasmic reticulum and is phosphorylated by TBK1 on the pLxIS motif, leading to recruitment and subsequent activation of the transcription factor IRF3 to induce expression of type I interferon and exert a potent anti-viral state. Exhibits 2',3' phosphodiester linkage-specific ligand recognition: can bind both 2'-3' linked cGAMP (2'-3'-cGAMP) and 3'-3' linked cGAMP but is preferentially activated by 2'-3' linked cGAMP. The preference for 2'-3'-cGAMP, compared to other linkage isomers is probably due to the ligand itself, whichs adopts an organized free-ligand conformation that resembles the STING1-bound conformation and pays low energy costs in changing into the active conformation. In addition to promote the production of type I interferons, plays a direct role in autophagy. Following cGAMP-binding, STING1 buds from the endoplasmic reticulum into COPII vesicles, which then form the endoplasmic reticulum-Golgi intermediate compartment (ERGIC). The ERGIC serves as the membrane source for WIPI2 recruitment and LC3 lipidation, leading to formation of autophagosomes that target cytosolic DNA or DNA viruses for degradation by the lysosome. Promotes autophagy by acting as a proton channel that directs proton efflux from the Golgi to facilitate MAP1LC3B/LC3B lipidation. The autophagy- and interferon-inducing activities can be uncoupled and autophagy induction is independent of TBK1 phosphorylation. Autophagy is also triggered upon infection by bacteria: following c-di-GMP-binding, which is produced by live Gram-positive bacteria, promotes reticulophagy. May be involved in translocon function, the translocon possibly being able to influence the induction of type I interferons. May be involved in transduction of apoptotic signals via its association with the major histocompatibility complex class II (MHC-II). In Rattus norvegicus (Rat), this protein is Stimulator of interferon genes protein.